Here is an 80-residue protein sequence, read N- to C-terminus: Acyl carrier protein (80 aa).

The 76-residue stretch at 1-76 (MTLEEKIIEI…DVIDYLKVRN (76 aa)) folds into the Carrier domain. O-(pantetheine 4'-phosphoryl)serine is present on serine 36.

This sequence belongs to the acyl carrier protein (ACP) family. In terms of processing, 4'-phosphopantetheine is transferred from CoA to a specific serine of apo-ACP by AcpS. This modification is essential for activity because fatty acids are bound in thioester linkage to the sulfhydryl of the prosthetic group.

The protein resides in the cytoplasm. The protein operates within lipid metabolism; fatty acid biosynthesis. Functionally, carrier of the growing fatty acid chain in fatty acid biosynthesis. This is Acyl carrier protein from Syntrophus aciditrophicus (strain SB).